The sequence spans 413 residues: Endoplasmic reticulum resident protein 44.2 (413 aa).

Residues 1-21 form the signal peptide; it reads MNLASVLLLLAACHLSVSVNG. The Thioredoxin domain maps to 22 to 136; that stretch reads QEHKEAIELS…LTNFVKFQLS (115 aa). A disulfide bridge connects residues cysteine 184 and cysteine 233. Asparagine 264 is a glycosylation site (N-linked (GlcNAc...) asparagine). Positions 367-413 are disordered; the sequence is KAARGITDDHEAQAPSTRPIDTTPPPSVFKELKPSDKRYSILQKSEL. A compositionally biased stretch (basic and acidic residues) spans 396–413; sequence KELKPSDKRYSILQKSEL. Positions 410-413 match the Prevents secretion from ER motif; sequence KSEL.

It is found in the endoplasmic reticulum lumen. The sequence is that of Endoplasmic reticulum resident protein 44.2 from Caenorhabditis elegans.